We begin with the raw amino-acid sequence, 156 residues long: Small ribosomal subunit protein uS7 (156 aa).

This sequence belongs to the universal ribosomal protein uS7 family. Part of the 30S ribosomal subunit. Contacts proteins S9 and S11.

Its function is as follows. One of the primary rRNA binding proteins, it binds directly to 16S rRNA where it nucleates assembly of the head domain of the 30S subunit. Is located at the subunit interface close to the decoding center, probably blocks exit of the E-site tRNA. The protein is Small ribosomal subunit protein uS7 of Shewanella denitrificans (strain OS217 / ATCC BAA-1090 / DSM 15013).